The primary structure comprises 191 residues: Photosystem I assembly protein Ycf4 (191 aa).

A run of 2 helical transmembrane segments spans residues 34-54 and 68-88; these read VASM…SSYF and IFVP…LLAI.

Belongs to the Ycf4 family.

The protein localises to the cellular thylakoid membrane. Its function is as follows. Seems to be required for the assembly of the photosystem I complex. The sequence is that of Photosystem I assembly protein Ycf4 from Prochlorococcus marinus (strain NATL1A).